Reading from the N-terminus, the 470-residue chain is Uronate isomerase (470 aa).

Belongs to the metallo-dependent hydrolases superfamily. Uronate isomerase family.

The enzyme catalyses D-glucuronate = D-fructuronate. It catalyses the reaction aldehydo-D-galacturonate = keto-D-tagaturonate. It functions in the pathway carbohydrate metabolism; pentose and glucuronate interconversion. The protein is Uronate isomerase of Serratia proteamaculans (strain 568).